The sequence spans 225 residues: UPF0758 protein SO_4248 (225 aa).

The region spanning 102–224 is the MPN domain; that stretch reads VLTNPDLTRD…IVSFAERGWI (123 aa). Residues His173, His175, and Asp186 each contribute to the Zn(2+) site. The JAMM motif signature appears at 173 to 186; that stretch reads HNHPSGIAEPSQAD.

Belongs to the UPF0758 family.

The sequence is that of UPF0758 protein SO_4248 from Shewanella oneidensis (strain ATCC 700550 / JCM 31522 / CIP 106686 / LMG 19005 / NCIMB 14063 / MR-1).